A 322-amino-acid chain; its full sequence is Transaldolase (322 aa).

The active-site Schiff-base intermediate with substrate is K136.

This sequence belongs to the transaldolase family. Type 1 subfamily. As to quaternary structure, homodimer.

Its subcellular location is the cytoplasm. The catalysed reaction is D-sedoheptulose 7-phosphate + D-glyceraldehyde 3-phosphate = D-erythrose 4-phosphate + beta-D-fructose 6-phosphate. The protein operates within carbohydrate degradation; pentose phosphate pathway; D-glyceraldehyde 3-phosphate and beta-D-fructose 6-phosphate from D-ribose 5-phosphate and D-xylulose 5-phosphate (non-oxidative stage): step 2/3. In terms of biological role, transaldolase is important for the balance of metabolites in the pentose-phosphate pathway. The polypeptide is Transaldolase (Xanthomonas oryzae pv. oryzae (strain PXO99A)).